Reading from the N-terminus, the 123-residue chain is Small ribosomal subunit protein uS12 (123 aa).

A 3-methylthioaspartic acid modification is found at Asp-89.

This sequence belongs to the universal ribosomal protein uS12 family. In terms of assembly, part of the 30S ribosomal subunit. Contacts proteins S8 and S17. May interact with IF1 in the 30S initiation complex.

Functionally, with S4 and S5 plays an important role in translational accuracy. Interacts with and stabilizes bases of the 16S rRNA that are involved in tRNA selection in the A site and with the mRNA backbone. Located at the interface of the 30S and 50S subunits, it traverses the body of the 30S subunit contacting proteins on the other side and probably holding the rRNA structure together. The combined cluster of proteins S8, S12 and S17 appears to hold together the shoulder and platform of the 30S subunit. This Trichlorobacter lovleyi (strain ATCC BAA-1151 / DSM 17278 / SZ) (Geobacter lovleyi) protein is Small ribosomal subunit protein uS12.